We begin with the raw amino-acid sequence, 137 residues long: Proofreading thioesterase EntH (137 aa).

Glu63 (nucleophile or proton acceptor) is an active-site residue.

The protein belongs to the thioesterase PaaI family. As to quaternary structure, homotetramer. Dimer of dimers. Interacts specifically with the aryl carrier protein (ArCP) domain of EntB.

The protein localises to the cytoplasm. The protein operates within siderophore biosynthesis; enterobactin biosynthesis. Required for optimal enterobactin synthesis. Acts as a proofreading enzyme that prevents EntB misacylation by hydrolyzing the thioester bound existing between EntB and wrongly charged molecules. The chain is Proofreading thioesterase EntH from Escherichia coli O6:H1 (strain CFT073 / ATCC 700928 / UPEC).